A 236-amino-acid polypeptide reads, in one-letter code: Demethylmenaquinone methyltransferase (236 aa).

S-adenosyl-L-methionine-binding positions include threonine 58, aspartate 79, and asparagine 106–alanine 107.

Belongs to the class I-like SAM-binding methyltransferase superfamily. MenG/UbiE family.

The enzyme catalyses a 2-demethylmenaquinol + S-adenosyl-L-methionine = a menaquinol + S-adenosyl-L-homocysteine + H(+). Its pathway is quinol/quinone metabolism; menaquinone biosynthesis; menaquinol from 1,4-dihydroxy-2-naphthoate: step 2/2. In terms of biological role, methyltransferase required for the conversion of demethylmenaquinol (DMKH2) to menaquinol (MKH2). The polypeptide is Demethylmenaquinone methyltransferase (Alkalihalophilus pseudofirmus (strain ATCC BAA-2126 / JCM 17055 / OF4) (Bacillus pseudofirmus)).